The following is a 312-amino-acid chain: MSAPGADFDTERDLRAAQKAEVLVQALPWLERFAGAVVVIKFGGNAMIDADLEAAFADDVLFLRRVGLKPVVVHGGGPQITQMLAKLEITSEFRGGLRVTTPEAMDVVRMVLTGQVQRRLVTMLNARGPLAVGLSGEDAGLFRAQRRSAVVDGEPVDVGLVGDVSRVDPLAVADLLDAGRIPVVSTIATDEADPTQILNVNADTAASALAVALGATKLVVLTDVEGLYSAWPDRSSLVSLISAAELEAMLPGLDAGMVPKMEACLRAVRGGVPQAHVIDGRAPHALLLEVFTTEGVGTMVLPDEAAAGASSE.

Substrate-binding positions include 76 to 77, arginine 98, and asparagine 199; that span reads GG.

It belongs to the acetylglutamate kinase family. ArgB subfamily.

The protein resides in the cytoplasm. It carries out the reaction N-acetyl-L-glutamate + ATP = N-acetyl-L-glutamyl 5-phosphate + ADP. It participates in amino-acid biosynthesis; L-arginine biosynthesis; N(2)-acetyl-L-ornithine from L-glutamate: step 2/4. Functionally, catalyzes the ATP-dependent phosphorylation of N-acetyl-L-glutamate. This Beutenbergia cavernae (strain ATCC BAA-8 / DSM 12333 / CCUG 43141 / JCM 11478 / NBRC 16432 / NCIMB 13614 / HKI 0122) protein is Acetylglutamate kinase.